Reading from the N-terminus, the 160-residue chain is Keratin-associated protein 9-6 (160 aa).

16 repeat units span residues 4–8 (CCSPG), 13–17 (CCRTT), 18–22 (CCRTT), 37–41 (CCQPS), 42–46 (CCVSS), 47–51 (CCQPY), 56–60 (CCQNT), 61–65 (CCRTT), 66–70 (CCQPT), 75–79 (CCQPS), 80–84 (CCSTP), 90–94 (CCGSS), 95–99 (CCGQT), 140–144 (CCQPC), 149–153 (CCVSS), and 154–158 (CCQHS). The interval 4–158 (CCSPGCQPTC…CCVSSCCQHS (155 aa)) is 16 X 5 AA repeats of C-C-[GSVRQ]-[QTSPHN]-[TPSGYC].

The protein belongs to the KRTAP type 9 family. In terms of assembly, interacts with hair keratins.

In terms of biological role, in the hair cortex, hair keratin intermediate filaments are embedded in an interfilamentous matrix, consisting of hair keratin-associated proteins (KRTAP), which are essential for the formation of a rigid and resistant hair shaft through their extensive disulfide bond cross-linking with abundant cysteine residues of hair keratins. The matrix proteins include the high-sulfur and high-glycine-tyrosine keratins. The chain is Keratin-associated protein 9-6 from Homo sapiens (Human).